We begin with the raw amino-acid sequence, 387 residues long: Polyadenylate-binding protein RBP45A (387 aa).

RRM domains follow at residues 60–140, 154–233, and 260–332; these read KSLW…WAQA, HTIF…PAAN, and TTIF…WGRS. Residues 329–342 show a composition bias toward polar residues; the sequence is WGRSPNKQSDQAQW. Residues 329–387 are disordered; sequence WGRSPNKQSDQAQWNGGGYYGYPPQPQGGYGYAAQPPTQDPNAYYGGYTGYGNYQQQRQ.

The protein belongs to the polyadenylate-binding RBP45 family. In terms of assembly, interacts with the poly(A) tail of mRNA in nucleus. In terms of tissue distribution, mostly expressed in seedlings, and, to a lower extent, in leaves, stems, and flowers. Present in immature anther tissues (tapetum cells) and mature pollen grains.

It localises to the nucleus. Functionally, heterogeneous nuclear ribonucleoprotein (hnRNP)-protein binding the poly(A) tail of mRNA and probably involved in some steps of pre-mRNA maturation. The chain is Polyadenylate-binding protein RBP45A (RBP45A) from Arabidopsis thaliana (Mouse-ear cress).